Reading from the N-terminus, the 433-residue chain is E3 ubiquitin-protein ligase RNF26 (433 aa).

The next 5 helical transmembrane spans lie at 24 to 44 (LNFL…AFVY), 60 to 80 (GVLL…CGGL), 147 to 169 (VINS…VLAL), 183 to 203 (VVAA…ILLW), and 220 to 240 (LASF…VLAV). The RING-type zinc finger occupies 380 to 422 (CVICQDQSKTVLLLPCRHLCLCQACTEILMRHPVYHRNCPLCR).

As to quaternary structure, interacts with INCA1. Interacts with TMEM43, ENDOD1, TMEM33 and TMED1 to form a complex capable of modulating innate immune signaling through the cGAS-STING pathway. Interacts with UBE2J1; this interaction is important for SQSTM1 ubiquitination. As to expression, ubiquitous. Up-regulated in several cancer cell lines.

The protein resides in the endoplasmic reticulum membrane. The enzyme catalyses S-ubiquitinyl-[E2 ubiquitin-conjugating enzyme]-L-cysteine + [acceptor protein]-L-lysine = [E2 ubiquitin-conjugating enzyme]-L-cysteine + N(6)-ubiquitinyl-[acceptor protein]-L-lysine.. Its pathway is protein modification; protein ubiquitination. Its function is as follows. E3 ubiquitin-protein ligase that plays a key role in endosome organization by retaining vesicles in the perinuclear cloud. Acts as a platform for perinuclear positioning of the endosomal system by mediating ubiquitination of SQSTM1 through interaction with the ubiquitin conjugating enzyme UBE2J1. Ubiquitinated SQSTM1 attracts specific vesicle-associated adapters, forming a molecular bridge that restrains cognate vesicles in the perinuclear region and organizes the endosomal pathway for efficient cargo transport. Also acts as a regulator of type I interferon production in response to viral infection by mediating the formation of 'Lys-11'-linked polyubiquitin chains on TMEM173/STING, leading to stabilize TMEM173/STING. Also required to limit type I interferon response by promoting autophagic degradation of IRF3. This chain is E3 ubiquitin-protein ligase RNF26, found in Homo sapiens (Human).